Here is a 207-residue protein sequence, read N- to C-terminus: Histone H1-like protein HC2 (207 aa).

Composition is skewed to basic residues over residues 1–50 (MLGV…KTVA) and 59–72 (PAAK…APVR). The tract at residues 1–72 (MLGVQKKRST…KTAAKKAPVR (72 aa)) is disordered. 3 repeat units span residues 35–58 (VRKV…AARK), 71–94 (VRKV…AARK), and 113–136 (VRKV…AARK). A 3 X 24 AA repeats of V-R-K-V-A-A-K-K-T-V-A-R-K-T-V-A-K-K-A-V-A-A-R-K region spans residues 35-136 (VRKVAAKKTV…VAKKAVAARK (102 aa)).

This sequence belongs to the histone H1/H5 family. HCT subfamily.

In terms of biological role, might have a role in establishing the nucleoid structure of elementary bodies. The protein is Histone H1-like protein HC2 (hctB) of Chlamydia muridarum (strain MoPn / Nigg).